We begin with the raw amino-acid sequence, 30 residues long: Photosystem I reaction center subunit XII (30 aa).

Residues 5-25 (SQIFFALCIALTAAVLAIGLG) traverse the membrane as a helical segment.

It belongs to the PsaM family.

It is found in the plastid. The protein resides in the chloroplast thylakoid membrane. In Emiliania huxleyi (Coccolithophore), this protein is Photosystem I reaction center subunit XII.